Consider the following 137-residue polypeptide: Gonadotropin subunit beta-1 (137 aa).

The signal sequence occupies residues Met1–Ala24. Cystine bridges form between Cys32–Cys78, Cys46–Cys93, Cys55–Cys108, Cys59–Cys110, and Cys113–Cys120. Asn36 carries an N-linked (GlcNAc...) asparagine glycan.

Belongs to the glycoprotein hormones subunit beta family. As to quaternary structure, heterodimer of an alpha and a beta chain.

The protein resides in the secreted. Involved in gametogenesis and steroidogenesis. The chain is Gonadotropin subunit beta-1 (cgba) from Oncorhynchus masou (Cherry salmon).